A 235-amino-acid chain; its full sequence is Chalcone--flavanone isomerase 1 (235 aa).

2 residues coordinate substrate: Thr50 and Ser192.

Belongs to the chalcone isomerase family.

It carries out the reaction a chalcone = a flavanone.. Its pathway is secondary metabolite biosynthesis; flavonoid biosynthesis. Functionally, catalyzes the intramolecular cyclization of bicyclic chalcones into tricyclic (S)-flavanones. Responsible for the isomerization of 4,2',4',6'-tetrahydroxychalcone (also termed chalcone) into naringenin. This is Chalcone--flavanone isomerase 1 (CHI1) from Chrysanthemum morifolium (Florist's daisy).